A 206-amino-acid chain; its full sequence is MMTNWNFNKANKPLLLVVSGPSGVGKDAVLARMKERKLPLAYIVTTTTRTKREKETEGVDYNFIRPAEFQQLIGQNELLEWANVYGNFYGVPKAPIRQALAHGFDVIVKVDVQGAASIKKIVPNAVFIFLMPPDMDELTRRLEHRLTESPESLKRRLATAPLEIEKLPDFDYVVVNPEGEIDNAVSEIMSIISAEHCRINPRSIEL.

A Guanylate kinase-like domain is found at 13-193; sequence PLLLVVSGPS…AVSEIMSIIS (181 aa). 20–27 is an ATP binding site; sequence GPSGVGKD.

This sequence belongs to the guanylate kinase family.

The protein localises to the cytoplasm. It carries out the reaction GMP + ATP = GDP + ADP. Essential for recycling GMP and indirectly, cGMP. The sequence is that of Guanylate kinase from Dehalococcoides mccartyi (strain ATCC BAA-2266 / KCTC 15142 / 195) (Dehalococcoides ethenogenes (strain 195)).